Consider the following 299-residue polypeptide: Taste receptor type 2 member 1 (299 aa).

Over 1-9 the chain is Extracellular; it reads MLESHLIIY. Residues 10-30 traverse the membrane as a helical segment; it reads FLLAVIQFLLGIFTNGIIVVV. At 31–55 the chain is on the cytoplasmic side; that stretch reads NGIDLIKHRKMAPLDLLLSCLAVSR. Residues 56-76 form a helical membrane-spanning segment; that stretch reads IFLQLFIFYVNVIVIFFIEFI. At 77–81 the chain is on the extracellular side; sequence MCSAN. Residues 82-102 form a helical membrane-spanning segment; the sequence is CAILLFVNELELWLATWLGVF. Residues 103–124 are Cytoplasmic-facing; that stretch reads YCAKVASVRHPLFIWLKMRISK. Residues 125–145 traverse the membrane as a helical segment; sequence LVPWMILGSLLYVSMICVFHS. Residues 146 to 178 are Extracellular-facing; sequence KYAGFMVPHFLRNFFSQNATIQKEDTLAIQIFS. Asn-163 is a glycosylation site (N-linked (GlcNAc...) asparagine). The chain crosses the membrane as a helical span at residues 179–199; the sequence is FVAEFSVPLLIFLVAVLLLIF. Residues 200-222 lie on the Cytoplasmic side of the membrane; it reads SLGRHTRQMRNTVAGSRVPGRGA. The chain crosses the membrane as a helical span at residues 223–243; sequence PISALLSILSFLILYFSHCMI. Residues 244–257 are Extracellular-facing; that stretch reads KVFLSSLKFHVRRF. The helical transmembrane segment at 258-278 threads the bilayer; it reads IFLFFILVIGIYPSGHSLILI. Over 279–299 the chain is Cytoplasmic; the sequence is LGNPKLKQNAKKFLLHSKCCQ.

Belongs to the G-protein coupled receptor T2R family.

The protein resides in the membrane. Its function is as follows. Receptor that may play a role in the perception of bitterness and is gustducin-linked. May play a role in sensing the chemical composition of the gastrointestinal content. The activity of this receptor may stimulate alpha gustducin, mediate PLC-beta-2 activation and lead to the gating of TRPM5. The protein is Taste receptor type 2 member 1 (TAS2R1) of Pan paniscus (Pygmy chimpanzee).